The sequence spans 1342 residues: DNA-directed RNA polymerase subunit beta (1342 aa).

An N6-acetyllysine mark is found at K1022 and K1200.

It belongs to the RNA polymerase beta chain family. The RNAP catalytic core consists of 2 alpha, 1 beta, 1 beta' and 1 omega subunit. When a sigma factor is associated with the core the holoenzyme is formed, which can initiate transcription.

The enzyme catalyses RNA(n) + a ribonucleoside 5'-triphosphate = RNA(n+1) + diphosphate. In terms of biological role, DNA-dependent RNA polymerase catalyzes the transcription of DNA into RNA using the four ribonucleoside triphosphates as substrates. The sequence is that of DNA-directed RNA polymerase subunit beta from Shigella flexneri serotype 5b (strain 8401).